The following is a 113-amino-acid chain: T cell receptor alpha variable 8-3 (113 aa).

Residues 1 to 20 (MLLELIPLLGIHFVLRTARA) form the signal peptide. In terms of domain architecture, Ig-like spans 21–113 (QSVTQPDIHI…DAAEYFCAVG (93 aa)). A disulfide bridge connects residues Cys-42 and Cys-110. N-linked (GlcNAc...) asparagine glycosylation is present at Asn-43.

Alpha-beta TR is a heterodimer composed of an alpha and beta chain; disulfide-linked. The alpha-beta TR is associated with the transmembrane signaling CD3 coreceptor proteins to form the TR-CD3 (TcR or TCR). The assembly of alpha-beta TR heterodimers with CD3 occurs in the endoplasmic reticulum where a single alpha-beta TR heterodimer associates with one CD3D-CD3E heterodimer, one CD3G-CD3E heterodimer and one CD247 homodimer forming a stable octameric structure. CD3D-CD3E and CD3G-CD3E heterodimers preferentially associate with TR alpha and TR beta chains, respectively. The association of the CD247 homodimer is the last step of TcR assembly in the endoplasmic reticulum and is required for transport to the cell surface.

Its subcellular location is the cell membrane. Functionally, v region of the variable domain of T cell receptor (TR) alpha chain that participates in the antigen recognition. Alpha-beta T cell receptors are antigen specific receptors which are essential to the immune response and are present on the cell surface of T lymphocytes. Recognize peptide-major histocompatibility (MH) (pMH) complexes that are displayed by antigen presenting cells (APC), a prerequisite for efficient T cell adaptive immunity against pathogens. Binding of alpha-beta TR to pMH complex initiates TR-CD3 clustering on the cell surface and intracellular activation of LCK that phosphorylates the ITAM motifs of CD3G, CD3D, CD3E and CD247 enabling the recruitment of ZAP70. In turn ZAP70 phosphorylates LAT, which recruits numerous signaling molecules to form the LAT signalosome. The LAT signalosome propagates signal branching to three major signaling pathways, the calcium, the mitogen-activated protein kinase (MAPK) kinase and the nuclear factor NF-kappa-B (NF-kB) pathways, leading to the mobilization of transcription factors that are critical for gene expression and essential for T cell growth and differentiation. The T cell repertoire is generated in the thymus, by V-(D)-J rearrangement. This repertoire is then shaped by intrathymic selection events to generate a peripheral T cell pool of self-MH restricted, non-autoaggressive T cells. Post-thymic interaction of alpha-beta TR with the pMH complexes shapes TR structural and functional avidity. In Homo sapiens (Human), this protein is T cell receptor alpha variable 8-3.